The chain runs to 395 residues: Putative phosphatidate cytidylyltransferase (395 aa).

Transmembrane regions (helical) follow at residues 13–33, 78–98, 115–135, 144–164, 177–197, 201–221, 242–262, 306–326, and 358–378; these read STVFVVLLIVFCFFLMFSAFA, FAFGLVIVLFISVIAVLMNWE, SLLSGIMVSGGMIPTFFVIYF, WIWTASFAGMIVFLWAVYMIS, IYSLGAVICFIACIGTIYFSV, WTTIFLLIAIGVCTDTFAYLF, AFFGVTGTVLTISIICVLYSI, FYIYWWVSTLALIFTASIFAI, and FDSSSFLISFFFIYHVIAGIS.

It belongs to the CDS family.

Its subcellular location is the cell membrane. The enzyme catalyses a 1,2-diacyl-sn-glycero-3-phosphate + CTP + H(+) = a CDP-1,2-diacyl-sn-glycerol + diphosphate. Its pathway is phospholipid metabolism; CDP-diacylglycerol biosynthesis; CDP-diacylglycerol from sn-glycerol 3-phosphate: step 3/3. This chain is Putative phosphatidate cytidylyltransferase (cdsA), found in Mycoplasma pneumoniae (strain ATCC 29342 / M129 / Subtype 1) (Mycoplasmoides pneumoniae).